Here is a 228-residue protein sequence, read N- to C-terminus: Translation initiation factor 6 (228 aa).

It belongs to the eIF-6 family.

In terms of biological role, binds to the 50S ribosomal subunit and prevents its association with the 30S ribosomal subunit to form the 70S initiation complex. This Thermococcus gammatolerans (strain DSM 15229 / JCM 11827 / EJ3) protein is Translation initiation factor 6.